A 97-amino-acid chain; its full sequence is uncharacterized protein (97 aa).

This is an uncharacterized protein from Haemophilus influenzae (Bacteriophage HP1).